The primary structure comprises 484 residues: Cobyric acid synthase (484 aa).

A GATase cobBQ-type domain is found at 251-438 (ALKIAVPMLP…LHGLFGSDAY (188 aa)). The active-site Nucleophile is Cys333. His430 is an active-site residue.

The protein belongs to the CobB/CobQ family. CobQ subfamily.

It functions in the pathway cofactor biosynthesis; adenosylcobalamin biosynthesis. Its function is as follows. Catalyzes amidations at positions B, D, E, and G on adenosylcobyrinic A,C-diamide. NH(2) groups are provided by glutamine, and one molecule of ATP is hydrogenolyzed for each amidation. In Rhizobium etli (strain ATCC 51251 / DSM 11541 / JCM 21823 / NBRC 15573 / CFN 42), this protein is Cobyric acid synthase.